Reading from the N-terminus, the 542-residue chain is Plasminogen-binding protein PgbB (542 aa).

Residues 399 to 542 (KSASKKSQKG…RRKALEMNKK (144 aa)) are disordered. 2 stretches are compositionally biased toward basic and acidic residues: residues 418 to 435 (QERH…ENKV) and 447 to 456 (VKTRRPEPIR). Residues 457 to 467 (DQNNATQQGET) are compositionally biased toward polar residues. Positions 481-542 (NAAKKEVPKP…RRKALEMNKK (62 aa)) are enriched in basic and acidic residues.

It is found in the cell surface. Functionally, binds plasminogen, specifically, and in a concentration and lysine-dependent manner. Plasminogen is the precursor of plasmin, a serine protease that cleaves fibrin, fibronectin, laminin and vitronectin. Acquisition of plasminogen/plasmin could enable H.pylori to degrade host components. This is Plasminogen-binding protein PgbB (pgbB) from Helicobacter pylori (strain ATCC 700392 / 26695) (Campylobacter pylori).